A 33-amino-acid chain; its full sequence is Cecropin-B (33 aa).

Lys21 bears the 5-hydroxylysine mark.

Monomer. In terms of tissue distribution, hemolymph.

Its subcellular location is the secreted. Cecropins have lytic and antibacterial activity against several Gram-positive and Gram-negative bacteria. Also has activity against fungi. The chain is Cecropin-B from Heliothis virescens (Tobacco budworm moth).